Reading from the N-terminus, the 423-residue chain is CinA-like protein (423 aa).

This sequence belongs to the CinA family.

In Synechococcus sp. (strain CC9311), this protein is CinA-like protein.